The following is a 185-amino-acid chain: MIIIVTGMPGSGKSKIVKEFEKRGVPSVSMGDVVREETAKRGLELTKENVAKVSIRLRQELGQNAVAKLAVEKVRELLRKNKVVVIDGVRSLDEVGTFRSAFPGEEIIIVAVHTPPHMRFERLKARGRHDDPQSWEDFEERDWKELKFGIGNVIAMADYMIVNDCPKEEYERRVQELVEKILAEH.

7–14 (GMPGSGKS) provides a ligand contact to ATP.

It belongs to the UPF0200 family.

The polypeptide is UPF0200 protein TON_1344 (Thermococcus onnurineus (strain NA1)).